We begin with the raw amino-acid sequence, 293 residues long: Undecaprenyl-diphosphatase (293 aa).

6 helical membrane-spanning segments follow: residues 74–94, 107–127, 134–154, 209–229, 243–263, and 271–291; these read VLVF…AGVF, WMII…KDLI, MWIT…AEKM, FLLA…DAFA, VGTL…MKFV, and FAAY…LGML.

The protein belongs to the UppP family.

The protein resides in the cell membrane. The catalysed reaction is di-trans,octa-cis-undecaprenyl diphosphate + H2O = di-trans,octa-cis-undecaprenyl phosphate + phosphate + H(+). In terms of biological role, catalyzes the dephosphorylation of undecaprenyl diphosphate (UPP). Confers resistance to bacitracin. The protein is Undecaprenyl-diphosphatase of Corynebacterium glutamicum (strain ATCC 13032 / DSM 20300 / JCM 1318 / BCRC 11384 / CCUG 27702 / LMG 3730 / NBRC 12168 / NCIMB 10025 / NRRL B-2784 / 534).